The following is a 468-amino-acid chain: ATP synthase subunit beta (468 aa).

An ATP-binding site is contributed by 155–162 (GGAGVGKT).

It belongs to the ATPase alpha/beta chains family. F-type ATPases have 2 components, CF(1) - the catalytic core - and CF(0) - the membrane proton channel. CF(1) has five subunits: alpha(3), beta(3), gamma(1), delta(1), epsilon(1). CF(0) has three main subunits: a(1), b(2) and c(9-12). The alpha and beta chains form an alternating ring which encloses part of the gamma chain. CF(1) is attached to CF(0) by a central stalk formed by the gamma and epsilon chains, while a peripheral stalk is formed by the delta and b chains.

The protein resides in the cell membrane. The catalysed reaction is ATP + H2O + 4 H(+)(in) = ADP + phosphate + 5 H(+)(out). Produces ATP from ADP in the presence of a proton gradient across the membrane. The catalytic sites are hosted primarily by the beta subunits. The polypeptide is ATP synthase subunit beta (Streptococcus pyogenes serotype M49 (strain NZ131)).